A 653-amino-acid chain; its full sequence is Structural protein ORF653 (653 aa).

Positions 300-330 (AKEETKQETKQETGKEEEEKKETKQESQEQL) form a coiled coil. The segment covering 302–326 (EETKQETKQETGKEEEEKKETKQES) has biased composition (basic and acidic residues). Disordered regions lie at residues 302 to 329 (EETK…SQEQ), 344 to 388 (GQPA…ENTP), and 626 to 653 (AGQQ…VKLS). Residues 371 to 381 (EENNAEAPQQR) show a composition bias toward low complexity. A coiled-coil region spans residues 505–649 (KEQELYKELD…EEEEEEGNDT (145 aa)). Residues 630–647 (EETDETTEEEEEEEEEGN) are compositionally biased toward acidic residues.

It is found in the virion. The sequence is that of Structural protein ORF653 from Acidianus two-tailed virus (ATV).